We begin with the raw amino-acid sequence, 247 residues long: Uridylate kinase (247 aa).

Position 15–18 (15–18 (KLSG)) interacts with ATP. The interval 23-28 (GDEGFG) is involved in allosteric activation by GTP. Gly-57 lines the UMP pocket. The ATP site is built by Gly-58 and Arg-62. UMP contacts are provided by residues Asp-77 and 138–145 (TGNPFFTT). The ATP site is built by Thr-165, Tyr-171, and Asp-174.

This sequence belongs to the UMP kinase family. Homohexamer.

It is found in the cytoplasm. It carries out the reaction UMP + ATP = UDP + ADP. Its pathway is pyrimidine metabolism; CTP biosynthesis via de novo pathway; UDP from UMP (UMPK route): step 1/1. With respect to regulation, allosterically activated by GTP. Inhibited by UTP. Functionally, catalyzes the reversible phosphorylation of UMP to UDP. The polypeptide is Uridylate kinase (Colwellia psychrerythraea (strain 34H / ATCC BAA-681) (Vibrio psychroerythus)).